The primary structure comprises 34 residues: Photosystem II reaction center protein Psb30 (34 aa).

The chain crosses the membrane as a helical span at residues 6–26; the sequence is VIGQLVSTGAIMLLGPAIIIL.

The protein belongs to the Psb30/Ycf12 family. In terms of assembly, PSII is composed of 1 copy each of membrane proteins PsbA, PsbB, PsbC, PsbD, PsbE, PsbF, PsbH, PsbI, PsbJ, PsbK, PsbL, PsbM, PsbT, PsbX, PsbY, PsbZ, Psb30/Ycf12, peripheral proteins of the oxygen-evolving complex and a large number of cofactors. It forms dimeric complexes.

The protein localises to the plastid. Its subcellular location is the chloroplast thylakoid membrane. A core subunit of photosystem II (PSII), probably helps stabilize the reaction center. The polypeptide is Photosystem II reaction center protein Psb30 (Thalassiosira pseudonana (Marine diatom)).